Consider the following 255-residue polypeptide: Type III pantothenate kinase (255 aa).

Asp-6–Met-13 serves as a coordination point for ATP. Gly-107–Arg-110 is a substrate binding site. Residue Asp-109 is the Proton acceptor of the active site. A K(+)-binding site is contributed by Asp-129. ATP is bound at residue Thr-132. Substrate is bound at residue Thr-183.

The protein belongs to the type III pantothenate kinase family. As to quaternary structure, homodimer. The cofactor is NH4(+). It depends on K(+) as a cofactor.

It localises to the cytoplasm. It catalyses the reaction (R)-pantothenate + ATP = (R)-4'-phosphopantothenate + ADP + H(+). It participates in cofactor biosynthesis; coenzyme A biosynthesis; CoA from (R)-pantothenate: step 1/5. Catalyzes the phosphorylation of pantothenate (Pan), the first step in CoA biosynthesis. This is Type III pantothenate kinase from Petrotoga mobilis (strain DSM 10674 / SJ95).